The following is a 227-amino-acid chain: Myogenin (227 aa).

The bHLH domain maps to 82–133 (DRRRAATLREKRRLKKVNEAFEALKRSTLLNPNQRLPKVEILRSAIQYIERL). The tract at residues 147–196 (QRELRYRPAAPQPAAPSECGSGSSSCSPEWSTQLEFGTNPADHLLSDDQA) is disordered. Positions 161–175 (APSECGSGSSSCSPE) are enriched in low complexity.

As to quaternary structure, homodimer and heterodimer. Efficient DNA binding requires dimerization with another bHLH protein.

Its subcellular location is the nucleus. Acts as a transcriptional activator that promotes transcription of muscle-specific target genes and plays a role in muscle differentiation. Induces fibroblasts to differentiate into myoblasts. Probable sequence specific DNA-binding protein. In Gallus gallus (Chicken), this protein is Myogenin (MYOG).